Here is a 101-residue protein sequence, read N- to C-terminus: Small ribosomal subunit protein bS18c (101 aa).

This sequence belongs to the bacterial ribosomal protein bS18 family. Part of the 30S ribosomal subunit.

The protein resides in the plastid. It is found in the chloroplast. The polypeptide is Small ribosomal subunit protein bS18c (Lepidium virginicum (Virginia pepperweed)).